A 529-amino-acid polypeptide reads, in one-letter code: Bifunctional purine biosynthesis protein PurH (529 aa).

An MGS-like domain is found at 1–148 (MEQSFLPIRC…KNYKYVTVVV (148 aa)).

This sequence belongs to the PurH family.

It catalyses the reaction (6R)-10-formyltetrahydrofolate + 5-amino-1-(5-phospho-beta-D-ribosyl)imidazole-4-carboxamide = 5-formamido-1-(5-phospho-D-ribosyl)imidazole-4-carboxamide + (6S)-5,6,7,8-tetrahydrofolate. It carries out the reaction IMP + H2O = 5-formamido-1-(5-phospho-D-ribosyl)imidazole-4-carboxamide. Its pathway is purine metabolism; IMP biosynthesis via de novo pathway; 5-formamido-1-(5-phospho-D-ribosyl)imidazole-4-carboxamide from 5-amino-1-(5-phospho-D-ribosyl)imidazole-4-carboxamide (10-formyl THF route): step 1/1. It participates in purine metabolism; IMP biosynthesis via de novo pathway; IMP from 5-formamido-1-(5-phospho-D-ribosyl)imidazole-4-carboxamide: step 1/1. The chain is Bifunctional purine biosynthesis protein PurH from Wigglesworthia glossinidia brevipalpis.